The primary structure comprises 127 residues: Large ribosomal subunit protein bL12 (127 aa).

It belongs to the bacterial ribosomal protein bL12 family. In terms of assembly, homodimer. Part of the ribosomal stalk of the 50S ribosomal subunit. Forms a multimeric L10(L12)X complex, where L10 forms an elongated spine to which 2 to 4 L12 dimers bind in a sequential fashion. Binds GTP-bound translation factors.

Forms part of the ribosomal stalk which helps the ribosome interact with GTP-bound translation factors. Is thus essential for accurate translation. The chain is Large ribosomal subunit protein bL12 from Syntrophobacter fumaroxidans (strain DSM 10017 / MPOB).